A 293-amino-acid polypeptide reads, in one-letter code: Transcription elongation factor S-II (293 aa).

Residues 4–81 (ADIRSAKAAL…KKWKADVSKG (78 aa)) form the TFIIS N-terminal domain. The tract at residues 81-123 (GRPLKTTTTTSSTPSKHADVGSQAQKQVQKQSSSGQRTFKSDN) is disordered. The segment covering 100–116 (VGSQAQKQVQKQSSSGQ) has biased composition (low complexity). The 116-residue stretch at 133–248 (IRNNCIGLMY…HAQGAKPQKA (116 aa)) folds into the TFIIS central domain. The TFIIS-type zinc finger occupies 251–291 (DLFTCGKCKQKKVSYYQMQTRSADEPMTTFCECTVCGNRWK). Zn(2+) contacts are provided by Cys255, Cys258, Cys283, and Cys286.

This sequence belongs to the TFS-II family.

The protein localises to the nucleus. In terms of biological role, necessary for efficient RNA polymerase II transcription elongation past template-encoded arresting sites. The arresting sites in DNA have the property of trapping a certain fraction of elongating RNA polymerases that pass through, resulting in locked ternary complexes. Cleavage of the nascent transcript by S-II allows the resumption of elongation from the new 3'-terminus. The chain is Transcription elongation factor S-II (tfs1) from Schizosaccharomyces pombe (strain 972 / ATCC 24843) (Fission yeast).